Here is a 325-residue protein sequence, read N- to C-terminus: Putative S-adenosyl-L-methionine-dependent methyltransferase MT0917 (325 aa).

Residues Asp126 and 155–156 each bind S-adenosyl-L-methionine; that span reads DL.

The protein belongs to the UPF0677 family.

Functionally, exhibits S-adenosyl-L-methionine-dependent methyltransferase activity. The chain is Putative S-adenosyl-L-methionine-dependent methyltransferase MT0917 from Mycobacterium tuberculosis (strain CDC 1551 / Oshkosh).